Here is a 453-residue protein sequence, read N- to C-terminus: MKFSAVILAAGKGTRMHSNMPKVLHTLAGKPMVKHVIDTCTGLGAQNIHLVFGHGGDQMQTTLADETVNWILQADQLGTGHAVDQASPRFEDDEKILVLYGDVPLISPETIENLLDAQPTGGIALLTVMLDNPTGYGRIIRKNGPVVAIVEQKDASEEQKQIKEINTGVMVATGGDLKRWLSGLNNNNAQGEYYLTDVIAAAHDEGRAVEAVHPVNAIEVEGVNDRAQLARLERAFQSMQAQKLLEQGVMLRDPARFDLRGELQCGMDCEIDANVIIEGNVSLGDNVIIGTGCVLKDCEIDDNTIVRPYSVIEGATVGEECTVGPFTRLRPGAELRNDAHVGNFVEVKNARIGEGSKANHLTYLGDAEIGQRTNIGAGTITCNYDGANKFKTIIGNDVFVGSDSQLVAPVTIADGATIGAGTTLTKDVEEGELVITRVKERKITGWQRPVKQK.

Residues 1 to 226 (MKFSAVILAA…AIEVEGVNDR (226 aa)) are pyrophosphorylase. Residues 8–11 (LAAG), K22, Q73, 78–79 (GT), 100–102 (YGD), G137, E151, N166, and N224 each bind UDP-N-acetyl-alpha-D-glucosamine. Residue D102 coordinates Mg(2+). N224 serves as a coordination point for Mg(2+). A linker region spans residues 227-247 (AQLARLERAFQSMQAQKLLEQ). The segment at 248 to 453 (GVMLRDPARF…TGWQRPVKQK (206 aa)) is N-acetyltransferase. R330 and K348 together coordinate UDP-N-acetyl-alpha-D-glucosamine. Catalysis depends on H360, which acts as the Proton acceptor. UDP-N-acetyl-alpha-D-glucosamine is bound by residues Y363 and N374. Acetyl-CoA-binding positions include A377, 383 to 384 (NY), S402, A420, and R437.

It in the N-terminal section; belongs to the N-acetylglucosamine-1-phosphate uridyltransferase family. This sequence in the C-terminal section; belongs to the transferase hexapeptide repeat family. Homotrimer. Mg(2+) serves as cofactor.

The protein localises to the cytoplasm. The catalysed reaction is alpha-D-glucosamine 1-phosphate + acetyl-CoA = N-acetyl-alpha-D-glucosamine 1-phosphate + CoA + H(+). The enzyme catalyses N-acetyl-alpha-D-glucosamine 1-phosphate + UTP + H(+) = UDP-N-acetyl-alpha-D-glucosamine + diphosphate. It functions in the pathway nucleotide-sugar biosynthesis; UDP-N-acetyl-alpha-D-glucosamine biosynthesis; N-acetyl-alpha-D-glucosamine 1-phosphate from alpha-D-glucosamine 6-phosphate (route II): step 2/2. The protein operates within nucleotide-sugar biosynthesis; UDP-N-acetyl-alpha-D-glucosamine biosynthesis; UDP-N-acetyl-alpha-D-glucosamine from N-acetyl-alpha-D-glucosamine 1-phosphate: step 1/1. Its pathway is bacterial outer membrane biogenesis; LPS lipid A biosynthesis. In terms of biological role, catalyzes the last two sequential reactions in the de novo biosynthetic pathway for UDP-N-acetylglucosamine (UDP-GlcNAc). The C-terminal domain catalyzes the transfer of acetyl group from acetyl coenzyme A to glucosamine-1-phosphate (GlcN-1-P) to produce N-acetylglucosamine-1-phosphate (GlcNAc-1-P), which is converted into UDP-GlcNAc by the transfer of uridine 5-monophosphate (from uridine 5-triphosphate), a reaction catalyzed by the N-terminal domain. The polypeptide is Bifunctional protein GlmU (Vibrio parahaemolyticus serotype O3:K6 (strain RIMD 2210633)).